A 53-amino-acid polypeptide reads, in one-letter code: Antilisterial bacteriocin subtilosin biosynthesis protein AlbB (53 aa).

2 consecutive transmembrane segments (helical) span residues 8 to 28 and 30 to 50; these read ILLYILSFIFVIGAVVYFVKS and YLFTLIFIAIAILFGMRARKA.

Its subcellular location is the cell membrane. In terms of biological role, involved in the production of the bacteriocin subtilosin. Required for maximal production and for optimal immunity to subtilosin. The protein is Antilisterial bacteriocin subtilosin biosynthesis protein AlbB (albB) of Bacillus subtilis (strain 168).